The following is a 708-amino-acid chain: Ion-translocating oxidoreductase complex subunit C (708 aa).

2 4Fe-4S ferredoxin-type domains span residues 369-397 (GEPQ…QQLY) and 407-436 (KATT…VQYF). 8 residues coordinate [4Fe-4S] cluster: C377, C380, C383, C387, C416, C419, C422, and C426. Residues 599–686 (KARKLEQQQS…EEQVDPRKAA (88 aa)) form a disordered region.

It belongs to the 4Fe4S bacterial-type ferredoxin family. RnfC subfamily. As to quaternary structure, the complex is composed of six subunits: RsxA, RsxB, RsxC, RsxD, RsxE and RsxG. Requires [4Fe-4S] cluster as cofactor.

It is found in the cell inner membrane. Its function is as follows. Part of a membrane-bound complex that couples electron transfer with translocation of ions across the membrane. Required to maintain the reduced state of SoxR. The polypeptide is Ion-translocating oxidoreductase complex subunit C (Escherichia coli (strain 55989 / EAEC)).